The sequence spans 699 residues: tRNA 5-methylaminomethyl-2-thiouridine biosynthesis bifunctional protein MnmC (699 aa).

The tRNA (mnm(5)s(2)U34)-methyltransferase stretch occupies residues 1-247 (MPAVSRPLPP…KREMLCGEIA (247 aa)). The interval 275–699 (IGAGLAGTSV…QPSPTTTETP (425 aa)) is FAD-dependent cmnm(5)s(2)U34 oxidoreductase. The disordered stretch occupies residues 675 to 699 (RGNATLSTSSPNDDAQPSPTTTETP).

It in the N-terminal section; belongs to the methyltransferase superfamily. tRNA (mnm(5)s(2)U34)-methyltransferase family. The protein in the C-terminal section; belongs to the DAO family. Requires FAD as cofactor.

It is found in the cytoplasm. The catalysed reaction is 5-aminomethyl-2-thiouridine(34) in tRNA + S-adenosyl-L-methionine = 5-methylaminomethyl-2-thiouridine(34) in tRNA + S-adenosyl-L-homocysteine + H(+). Catalyzes the last two steps in the biosynthesis of 5-methylaminomethyl-2-thiouridine (mnm(5)s(2)U) at the wobble position (U34) in tRNA. Catalyzes the FAD-dependent demodification of cmnm(5)s(2)U34 to nm(5)s(2)U34, followed by the transfer of a methyl group from S-adenosyl-L-methionine to nm(5)s(2)U34, to form mnm(5)s(2)U34. The protein is tRNA 5-methylaminomethyl-2-thiouridine biosynthesis bifunctional protein MnmC of Chromohalobacter salexigens (strain ATCC BAA-138 / DSM 3043 / CIP 106854 / NCIMB 13768 / 1H11).